An 843-amino-acid polypeptide reads, in one-letter code: F-box only protein 11 (843 aa).

Positions 1–63 are disordered; sequence MVAEESGPGA…RVSGKSQDLS (63 aa). Polar residues predominate over residues 30–45; the sequence is PTKNSMEGASTSTTEN. Residues 69–115 form the F-box domain; it reads QYLQEKLPDEVVLKIFSYLLEQDLCRAACVCKRFSELANDPILWKRL. 19 PbH1 repeats span residues 311–333, 334–356, 357–379, 380–402, 403–425, 426–448, 449–471, 472–494, 495–517, 518–540, 541–563, 564–586, 587–609, 610–632, 633–655, 656–678, 679–701, 702–724, and 725–746; these read GACP…YITD, HAQG…WVKN, HGNP…FTFD, HGMG…EVKA, YANP…YVHE, KGRG…WITS, NSDP…YIFG, DGRG…QIRT, NSCP…YVHE, KGQG…WVTT, GSTP…YFYD, NGHG…QIRT, GSNP…LVYN, SGLG…WIKT, DSNP…CIFN, GGRG…LIST, NSHP…EITN, HATA…FLAS, and GVNV…EKAV. The segment at 749 to 820 adopts a UBR-type zinc-finger fold; sequence GQCLYKISSY…LSNPCTLAGE (72 aa).

In terms of assembly, component of the SCF(FBXO11) complex consisting of CUL1, RBX1, SKP1 and FBXO11. Interacts with CIITA.

The protein localises to the nucleus. The protein resides in the chromosome. The protein operates within protein modification; protein ubiquitination. In terms of biological role, substrate recognition component of a SCF (SKP1-CUL1-F-box protein) E3 ubiquitin-protein ligase complex which mediates the ubiquitination and subsequent proteasomal degradation of target proteins, such as DTL/CDT2, BCL6, SNAI1 and PRDM1/BLIMP1. The SCF(FBXO11) complex mediates ubiquitination and degradation of BCL6, thereby playing a role in the germinal center B-cells terminal differentiation toward memory B-cells and plasma cells. The SCF(FBXO11) complex also mediates ubiquitination and degradation of DTL, an important step for the regulation of TGF-beta signaling, cell migration and the timing of the cell-cycle progression and exit. The SCF(FBXO11) complex also catalyzes ubiquitination and degradation of GSK3B-phosphorylated SNAI1. Binds to and neddylates phosphorylated p53/TP53, inhibiting its transcriptional activity. Plays a role in the regulatiom of erythropoiesis but not myelopoiesis or megakaryopoiesis. Mechanistically, activates erythroid genes by mediating the degradation of BAHD1, a heterochromatin-associated protein that recruits corepressors to H3K27me3 marks. Participates in macrophage cell death and inflammation in response to bacterial toxins by regulating the expression of complement 5a receptor 1/C5AR1 and IL-1beta. Acts as a critical regulator to determine the level of MHC-II by mediating the recognition of degron at the P/S/T domain of CIITA leading to its ubiquitination and subsequent degradation via the proteasome. Participates in the antiviral repsonse by initiating the activation of TBK1-IRF3-IFN-I axis. Mediates the 'Lys-63'-linked ubiquitination of TRAF3 to strengthen the interaction between TRAF3 and TBK1. The polypeptide is F-box only protein 11 (Fbxo11) (Rattus norvegicus (Rat)).